The sequence spans 101 residues: Nucleoid-associated protein Cla_0113 (101 aa).

This sequence belongs to the YbaB/EbfC family. In terms of assembly, homodimer.

It is found in the cytoplasm. It localises to the nucleoid. Binds to DNA and alters its conformation. May be involved in regulation of gene expression, nucleoid organization and DNA protection. The sequence is that of Nucleoid-associated protein Cla_0113 from Campylobacter lari (strain RM2100 / D67 / ATCC BAA-1060).